A 333-amino-acid polypeptide reads, in one-letter code: Probable malate dehydrogenase 3 (333 aa).

12–18 (GAAGQIA) is an NAD(+) binding site. The substrate site is built by arginine 93 and arginine 99. NAD(+)-binding positions include asparagine 106, glutamine 113, and 130–132 (VGN). Residues asparagine 132 and arginine 163 each coordinate substrate. The active-site Proton acceptor is the histidine 188.

It belongs to the LDH/MDH superfamily. MDH type 2 family. In terms of assembly, homodimer.

The enzyme catalyses (S)-malate + NAD(+) = oxaloacetate + NADH + H(+). Functionally, catalyzes the reversible oxidation of malate to oxaloacetate. This is Probable malate dehydrogenase 3 (mdhC) from Dictyostelium discoideum (Social amoeba).